Here is a 188-residue protein sequence, read N- to C-terminus: NAD(P)H-quinone oxidoreductase subunit J (188 aa).

Positions 1–12 are enriched in polar residues; sequence MSETPSKQTAAS. The disordered stretch occupies residues 1-23; sequence MSETPSKQTAASDETGAVVAPEP.

Belongs to the complex I 30 kDa subunit family. In terms of assembly, NDH-1 can be composed of about 15 different subunits; different subcomplexes with different compositions have been identified which probably have different functions.

It localises to the cellular thylakoid membrane. It carries out the reaction a plastoquinone + NADH + (n+1) H(+)(in) = a plastoquinol + NAD(+) + n H(+)(out). It catalyses the reaction a plastoquinone + NADPH + (n+1) H(+)(in) = a plastoquinol + NADP(+) + n H(+)(out). NDH-1 shuttles electrons from an unknown electron donor, via FMN and iron-sulfur (Fe-S) centers, to quinones in the respiratory and/or the photosynthetic chain. The immediate electron acceptor for the enzyme in this species is believed to be plastoquinone. Couples the redox reaction to proton translocation, and thus conserves the redox energy in a proton gradient. Cyanobacterial NDH-1 also plays a role in inorganic carbon-concentration. The protein is NAD(P)H-quinone oxidoreductase subunit J of Synechococcus sp. (strain CC9605).